Reading from the N-terminus, the 314-residue chain is 1-aminocyclopropane-1-carboxylate oxidase 1 (314 aa).

Residues 153-253 (PNFGTKVSNY…RMSIASFYNP (101 aa)) enclose the Fe2OG dioxygenase domain. His-177, Asp-179, and His-234 together coordinate Fe cation.

The protein belongs to the iron/ascorbate-dependent oxidoreductase family. Monomer. Fe cation serves as cofactor.

The enzyme catalyses 1-aminocyclopropane-1-carboxylate + L-ascorbate + O2 = ethene + L-dehydroascorbate + hydrogen cyanide + CO2 + 2 H2O. Its pathway is alkene biosynthesis; ethylene biosynthesis via S-adenosyl-L-methionine; ethylene from S-adenosyl-L-methionine: step 2/2. This chain is 1-aminocyclopropane-1-carboxylate oxidase 1, found in Malus domestica (Apple).